Reading from the N-terminus, the 246-residue chain is Probable transcriptional regulatory protein ESA_01378 (246 aa).

This sequence belongs to the TACO1 family.

The protein localises to the cytoplasm. This Cronobacter sakazakii (strain ATCC BAA-894) (Enterobacter sakazakii) protein is Probable transcriptional regulatory protein ESA_01378.